The sequence spans 170 residues: RNA pyrophosphohydrolase (170 aa).

The 144-residue stretch at 6 to 149 (GFRPNVGIIL…KRDVYRRALK (144 aa)) folds into the Nudix hydrolase domain. The Nudix box signature appears at 39-60 (GGIKHNESPENALYRELEEEVG).

Belongs to the Nudix hydrolase family. RppH subfamily. A divalent metal cation is required as a cofactor.

In terms of biological role, accelerates the degradation of transcripts by removing pyrophosphate from the 5'-end of triphosphorylated RNA, leading to a more labile monophosphorylated state that can stimulate subsequent ribonuclease cleavage. The sequence is that of RNA pyrophosphohydrolase from Saccharophagus degradans (strain 2-40 / ATCC 43961 / DSM 17024).